The chain runs to 231 residues: Claudin-10 (231 aa).

The chain crosses the membrane as a helical span at residues 1–21 (MASTASEIIAFMVSISGWVLV). Residues 22–80 (SSTLPTDYWKVSTIDGTVITTATYWANLWKTCVTDSTGVSNCKDFPSMLALDGYIQACR) lie on the Extracellular side of the membrane. Residues 81-101 (GLMIAAVSLGFFGSIFALIGM) traverse the membrane as a helical segment. At 102–115 (KCTKVGGSDKAKAK) the chain is on the cytoplasmic side. A helical membrane pass occupies residues 116 to 136 (IACLAGIVFILSGLCSMTGCS). Residues 137–160 (LYANKITTEFFDPLFVEQKYELGA) are Extracellular-facing. The helical transmembrane segment at 161 to 181 (ALFIGWAGASLCLIGGVIFCF) threads the bilayer. Residues 182–231 (SISDNNKAPRMGYTYNGATSVMSSRTKYHGREGDLKTPNPSKQFDKNAYV) are Cytoplasmic-facing.

This sequence belongs to the claudin family. Can form homodimers both in trans (interaction between CLDN10 molecules in opposing membranes) and in cis (interaction between CLDN10 molecules within one membrane). Interacts with CLDN19.

Its subcellular location is the cell junction. It localises to the tight junction. It is found in the cell membrane. The catalysed reaction is Na(+)(in) = Na(+)(out). It carries out the reaction Li(+)(in) = Li(+)(out). The enzyme catalyses K(+)(in) = K(+)(out). It catalyses the reaction Rb(+)(in) = Rb(+)(out). The catalysed reaction is Cs(+)(in) = Cs(+)(out). It carries out the reaction NH4(+)(in) = NH4(+)(out). The enzyme catalyses methylamine(out) = methylamine(in). It catalyses the reaction Mg(2+)(in) = Mg(2+)(out). The catalysed reaction is Ca(2+)(in) = Ca(2+)(out). It carries out the reaction Sr(2+)(in) = Sr(2+)(out). The enzyme catalyses chloride(in) = chloride(out). It catalyses the reaction nitrate(in) = nitrate(out). Forms paracellular channels: polymerizes in tight junction strands with cation- and anion-selective channels through the strands, conveying epithelial permeability in a process known as paracellular tight junction permeability. In sweat glands and in the thick ascending limb (TAL) of Henle's loop in kidney, it controls paracellular sodium permeability which is essential for proper sweat production and renal function. In renal proximal tubules, it conveys selective chloride over hydrogencarbonate anion permeability which is required for renal chloride reabsorption and salt homeostasis. In Bos taurus (Bovine), this protein is Claudin-10 (CLDN10).